A 350-amino-acid chain; its full sequence is Fe-S cluster assembly protein dre2 (350 aa).

Residues 23–156 (TSFNLRTLLL…KPDHSASVAV (134 aa)) are N-terminal SAM-like domain. Residues 157 to 242 (PLRLRRKDNS…EDTLLTEEDM (86 aa)) are linker. Positions 165-209 (NSKTTAVSNAGPPVSTVEVPVSGKRKSVDMTEDVPEKDVPKNDVP) are disordered. Over residues 190–208 (KSVDMTEDVPEKDVPKNDV) the composition is skewed to basic and acidic residues. [2Fe-2S] cluster contacts are provided by Cys-252, Cys-263, Cys-266, and Cys-268. A fe-S binding site A region spans residues 252–268 (CAPRAGKRRRACKDCTC). The [4Fe-4S] cluster site is built by Cys-313, Cys-316, Cys-324, and Cys-327. Short sequence motifs (cx2C motif) lie at residues 313–316 (CGNC) and 324–327 (CDGC). The segment at 313–327 (CGNCSLGDAFRCDGC) is fe-S binding site B.

It belongs to the anamorsin family. Monomer. Interacts with TAH18. Interacts with MIA40. [2Fe-2S] cluster serves as cofactor. [4Fe-4S] cluster is required as a cofactor.

Its subcellular location is the cytoplasm. It localises to the mitochondrion intermembrane space. Its function is as follows. Component of the cytosolic iron-sulfur (Fe-S) protein assembly (CIA) machinery required for the maturation of extramitochondrial Fe-S proteins. Part of an electron transfer chain functioning in an early step of cytosolic Fe-S biogenesis, facilitating the de novo assembly of a [4Fe-4S] cluster on the scaffold complex CFD1-NBP35. Electrons are transferred to DRE2 from NADPH via the FAD- and FMN-containing protein TAH18. TAH18-DRE2 are also required for the assembly of the diferric tyrosyl radical cofactor of ribonucleotide reductase (RNR), probably by providing electrons for reduction during radical cofactor maturation in the catalytic small subunit RNR2. The sequence is that of Fe-S cluster assembly protein dre2 from Sclerotinia sclerotiorum (strain ATCC 18683 / 1980 / Ss-1) (White mold).